The sequence spans 434 residues: Innexin-14 (434 aa).

A run of 4 helical transmembrane segments spans residues 30–50 (LFTV…QHFG), 106–126 (WVPF…WCWA), 301–321 (IFIG…IGTV), and 365–385 (YLCA…GFLK).

It belongs to the pannexin family.

The protein resides in the cell membrane. The protein localises to the cell junction. Its subcellular location is the gap junction. Its function is as follows. Structural component of the gap junctions. This chain is Innexin-14 (inx-14), found in Caenorhabditis elegans.